We begin with the raw amino-acid sequence, 215 residues long: Probable phosphoglycerate mutase GpmB (215 aa).

Substrate-binding positions include 8–15 (RHGETQWN), 21–22 (QG), R58, R60, 82–85 (ELNM), 104–105 (RR), and 151–152 (GI). Catalysis depends on H9, which acts as the Tele-phosphohistidine intermediate. E82 acts as the Proton donor/acceptor in catalysis.

This sequence belongs to the phosphoglycerate mutase family. GpmB subfamily.

The enzyme catalyses (2R)-2-phosphoglycerate = (2R)-3-phosphoglycerate. The protein operates within carbohydrate degradation; glycolysis; pyruvate from D-glyceraldehyde 3-phosphate: step 3/5. This is Probable phosphoglycerate mutase GpmB from Escherichia fergusonii (strain ATCC 35469 / DSM 13698 / CCUG 18766 / IAM 14443 / JCM 21226 / LMG 7866 / NBRC 102419 / NCTC 12128 / CDC 0568-73).